The following is an 89-amino-acid chain: Small ribosomal subunit protein uS15 (89 aa).

This sequence belongs to the universal ribosomal protein uS15 family. As to quaternary structure, part of the 30S ribosomal subunit. Forms a bridge to the 50S subunit in the 70S ribosome, contacting the 23S rRNA.

One of the primary rRNA binding proteins, it binds directly to 16S rRNA where it helps nucleate assembly of the platform of the 30S subunit by binding and bridging several RNA helices of the 16S rRNA. In terms of biological role, forms an intersubunit bridge (bridge B4) with the 23S rRNA of the 50S subunit in the ribosome. This chain is Small ribosomal subunit protein uS15, found in Acidiphilium cryptum (strain JF-5).